The chain runs to 314 residues: MRIGIVVDSACDLPQDFIQRNNVIVLPISVRIGEAVLADHRDEEATLSFLHAHVAERGHEAETTPFSVNQIRDLFLQRLVIDYDHVFCLTISKLRSQIFDNATQASFAILNDYKPVRQAAGHTSPFALRVIDTLNLFAGQGITAVEAVRLRAQGLGVAPIRARLEQLAEHTYGYMIPRDLYYLRARARTKGDRSVGLIGAALGSALDIKPVLRAYRGVTEPVAKLKGFEPSAEKLFAFTVRKLREGLMTPTVCVGYGGELAELHALPGYAALQAACQTQGVELFESVMSLTGMVNVGKGALAVAFAAEPHSFSA.

Residues 3-307 (IGIVVDSACD…KGALAVAFAA (305 aa)) enclose the DegV domain. Hexadecanoate contacts are provided by threonine 63 and serine 96.

Its function is as follows. May bind long-chain fatty acids, such as palmitate, and may play a role in lipid transport or fatty acid metabolism. The polypeptide is DegV domain-containing protein XCC3382 (Xanthomonas campestris pv. campestris (strain ATCC 33913 / DSM 3586 / NCPPB 528 / LMG 568 / P 25)).